Here is a 270-residue protein sequence, read N- to C-terminus: Dehydrodolichyl diphosphate synthase (270 aa).

The protein belongs to the UPP synthase family.

It is found in the endoplasmic reticulum membrane. It functions in the pathway protein modification; protein glycosylation. Its function is as follows. Cis-prenyl transferase that adds multiple copies of isopentenyl pyrophosphate (IPP) to farnesyl pyrophosphate (FPP) to produce dehydrodolichyl diphosphate (Dedol-PP). This is Dehydrodolichyl diphosphate synthase (RER2) from Encephalitozoon cuniculi (strain GB-M1) (Microsporidian parasite).